A 419-amino-acid chain; its full sequence is L-rhamnose isomerase (419 aa).

3 residues coordinate Mn(2+): H262, D294, and D296.

This sequence belongs to the rhamnose isomerase family. Homotetramer. Requires Mn(2+) as cofactor.

The protein resides in the cytoplasm. The enzyme catalyses L-rhamnopyranose = L-rhamnulose. It participates in carbohydrate degradation; L-rhamnose degradation; glycerone phosphate from L-rhamnose: step 1/3. Functionally, catalyzes the interconversion of L-rhamnose and L-rhamnulose. In Escherichia coli O81 (strain ED1a), this protein is L-rhamnose isomerase.